A 692-amino-acid polypeptide reads, in one-letter code: Ribonuclease R (692 aa).

Residues 204 to 525 (RKDLRDLLCF…IVHRLLFHPL (322 aa)) enclose the RNB domain. Residues 563–648 (KKFLDEQPAT…LTQAIEWTLI (86 aa)) enclose the S1 motif domain. The disordered stretch occupies residues 651-692 (KERSSSKKKKAKAKSNATQVKKKSSSKKKKAVSKAKKNRGGK). Basic residues predominate over residues 670 to 692 (VKKKSSSKKKKAVSKAKKNRGGK).

This sequence belongs to the RNR ribonuclease family. RNase R subfamily.

Its subcellular location is the cytoplasm. It catalyses the reaction Exonucleolytic cleavage in the 3'- to 5'-direction to yield nucleoside 5'-phosphates.. Functionally, 3'-5' exoribonuclease that releases 5'-nucleoside monophosphates and is involved in maturation of structured RNAs. This is Ribonuclease R from Chlamydia muridarum (strain MoPn / Nigg).